A 182-amino-acid polypeptide reads, in one-letter code: ATP synthase subunit delta (182 aa).

The protein belongs to the ATPase delta chain family. F-type ATPases have 2 components, F(1) - the catalytic core - and F(0) - the membrane proton channel. F(1) has five subunits: alpha(3), beta(3), gamma(1), delta(1), epsilon(1). F(0) has three main subunits: a(1), b(2) and c(10-14). The alpha and beta chains form an alternating ring which encloses part of the gamma chain. F(1) is attached to F(0) by a central stalk formed by the gamma and epsilon chains, while a peripheral stalk is formed by the delta and b chains.

It localises to the cell membrane. F(1)F(0) ATP synthase produces ATP from ADP in the presence of a proton or sodium gradient. F-type ATPases consist of two structural domains, F(1) containing the extramembraneous catalytic core and F(0) containing the membrane proton channel, linked together by a central stalk and a peripheral stalk. During catalysis, ATP synthesis in the catalytic domain of F(1) is coupled via a rotary mechanism of the central stalk subunits to proton translocation. Functionally, this protein is part of the stalk that links CF(0) to CF(1). It either transmits conformational changes from CF(0) to CF(1) or is implicated in proton conduction. The chain is ATP synthase subunit delta from Lactobacillus gasseri (strain ATCC 33323 / DSM 20243 / BCRC 14619 / CIP 102991 / JCM 1131 / KCTC 3163 / NCIMB 11718 / NCTC 13722 / AM63).